Here is a 510-residue protein sequence, read N- to C-terminus: MIPVSLVVVVVGGWTAVYLADLVLKSSVYFKHSYEDWLEKNGLSISPFHIRWQTSVFNRAFYSWGRRKARMLYQWFNFGMVFGVIAMFSSFFLLGKTLMQTLAQMMADSPSSSSSSSSSSSSSSSSSIHNEQVLQVVVPGINLPVNQLTYFFAAVLISGVVHEIGHGIAAIREQVRFNGFGIFLFIIYPGAFVDLFTTHLQLISPVQQLRIFCAGIWHNFVLALLGILALVLLPVILLPFYYTGVGVLITEVAEDSPAIGPRGLFVGDLVTHLQDCPVTNVQDWNECLDTIAYEPQIGYCISASTLQQLSFPVRAYKRLDGSTECCNNHSLTDVCFSYRNNFNKRLHTCLPARKAVEATQVCRTNKDCKTSSSSSFCIVPSLETHTRLIKVKHPPQIDMLYVGHPLHLHYTVSITSFIPRFNFLSIDLPVIVETFVKYLISLSGALAIVNAVPCFALDGQWILNSFLDATLTSVIGDNDVKDLIGFFILLGGSVLLAANVTLGLWMVTAR.

Topologically, residues 1 to 3 (MIP) are cytoplasmic. The chain crosses the membrane as a helical span at residues 4–24 (VSLVVVVVGGWTAVYLADLVL). Residues 25-74 (KSSVYFKHSYEDWLEKNGLSISPFHIRWQTSVFNRAFYSWGRRKARMLYQ) lie on the Lumenal side of the membrane. 2 helical membrane-spanning segments follow: residues 75-95 (WFNFGMVFGVIAMFSSFFLLG) and 96-107 (KTLMQTLAQMMA). Topologically, residues 108-135 (DSPSSSSSSSSSSSSSSSSSIHNEQVLQ) are lumenal. Residues 136–160 (VVVPGINLPVNQLTYFFAAVLISGV) form a helical membrane-spanning segment. His162 is a binding site for Zn(2+). Residue Glu163 is part of the active site. 3 helical membrane-spanning segments follow: residues 165–177 (GHGIAAIREQVRF), 178–200 (NGFGIFLFIIYPGAFVDLFTTHL), and 220–242 (FVLALLGILALVLLPVILLPFYY). His166 provides a ligand contact to Zn(2+). Residues 243 to 437 (TGVGVLITEV…LPVIVETFVK (195 aa)) lie on the Lumenal side of the membrane. Asn328 is a glycosylation site (N-linked (GlcNAc...) asparagine). 2 consecutive transmembrane segments (helical) span residues 438-455 (YLISLSGALAIVNAVPCF) and 456-467 (ALDGQWILNSFL). Topologically, residues 468–483 (DATLTSVIGDNDVKDL) are lumenal. Residues 484-504 (IGFFILLGGSVLLAANVTLGL) traverse the membrane as a helical segment. Residues 505 to 510 (WMVTAR) are Cytoplasmic-facing.

The protein belongs to the peptidase M50A family. Zn(2+) serves as cofactor.

It is found in the membrane. It localises to the cytoplasm. Its subcellular location is the golgi apparatus membrane. The catalysed reaction is Cleaves several transcription factors that are type-2 transmembrane proteins within membrane-spanning domains. Known substrates include sterol regulatory element-binding protein (SREBP) -1, SREBP-2 and forms of the transcriptional activator ATF6. SREBP-2 is cleaved at the site 477-DRSRILL-|-CVLTFLCLSFNPLTSLLQWGGA-505. The residues Asn-Pro, 11 residues distal to the site of cleavage in the membrane-spanning domain, are important for cleavage by S2P endopeptidase. Replacement of either of these residues does not prevent cleavage, but there is no cleavage if both of these residues are replaced.. Zinc metalloprotease that mediates intramembrane proteolysis of proteins such as ATF6, ATF6B, SREBF1/SREBP1 and SREBF2/SREBP2. Catalyzes the second step in the proteolytic activation of the sterol regulatory element-binding proteins (SREBPs) SREBF1/SREBP1 and SREBF2/SREBP2: cleaves SREBPs within the first transmembrane segment, thereby releasing the N-terminal segment with a portion of the transmembrane segment attached. Mature N-terminal SREBP fragments shuttle to the nucleus and activate gene transcription. Also mediates the second step in the proteolytic activation of the cyclic AMP-dependent transcription factor ATF-6 (ATF6 and ATF6B). Involved in intramembrane proteolysis during bone formation. In astrocytes and osteoblasts, upon DNA damage and ER stress, mediates the second step of the regulated intramembrane proteolytic activation of the transcription factor CREB3L1, leading to the inhibition of cell-cycle progression. This chain is Membrane-bound transcription factor site-2 protease (MBTPS2), found in Cricetulus griseus (Chinese hamster).